Consider the following 498-residue polypeptide: Minor fimbrium subunit Mfa1 (498 aa).

The N-terminal stretch at 1 to 19 (MKLNKMFLVGALLSLGFAS) is a signal peptide. Residue Cys-20 is the site of N-palmitoyl cysteine attachment. The S-diacylglycerol cysteine moiety is linked to residue Cys-20. Positions 20-50 (CSKEGNGPAPDSSSTADTHMSVSMSLPQHNR) are excised as a propeptide. The interval 436–476 (SGNPFVPTDPDPNNPDTPDNPDTPDPEDPDTPNPEEPLPVQ) is disordered.

It belongs to the bacteroidetes fimbrillin superfamily. FimA/Mfa1 family. In terms of assembly, structural component of the fimbrial stalk. Minor fimbriae are composed of a structural subunit, most often Mfa1, and the accessory subunits Mfa3, Mfa4 and Mfa5. Mfa1 interacts with Mfa2; this anchors the fimbrium in the membrane. Fimbrium assembly occurs by linear, head-to-tail oligomerization of fimbrial subunits. This is mediated via insertion of a C-terminal beta-strand from one subunit into a groove in the N-terminal domain of the following subunit.

The protein resides in the fimbrium. Its subcellular location is the cell outer membrane. In terms of biological role, structural subunit of the minor fimbriae. These filamentous pili are attached to the cell surface; they mediate biofilm formation, adhesion onto host cells and onto other bacteria that are part of the oral microbiome. They play an important role in invasion of periodontal tissues and are recognized as major virulence factors. Mfa1 orthologs from different strains have highly divergent sequences, and this correlates with pathogenicity. The protein is Minor fimbrium subunit Mfa1 of Porphyromonas gingivalis (Bacteroides gingivalis).